A 382-amino-acid polypeptide reads, in one-letter code: Elloramycin glycosyltransferase ElmGT (382 aa).

The protein belongs to the glycosyltransferase 28 family.

It catalyses the reaction 8-demethyltetracenomycin C + dTDP-beta-L-rhamnose = 8-demethyl-8-alpha-L-rhamnosyl-tetracenomycin C + dTDP + H(+). The protein operates within antibiotic biosynthesis. Functionally, glycosyltransferase that transfers an L-rhamnose moiety from dTDP-L-rhamnose to the elloramycin aglycone 8-demethyl-tetracenomycin C (8DMTC) in elloramycin biosynthesis, an antitumor polyketide. Possesses donor substrate flexibility: able to transfer at least 11 different sugars to 8DMTC, such as NDP-D-glucose, as well as NDP-L-digitoxose, including both L- and D-isomeric forms of some sugars. The chain is Elloramycin glycosyltransferase ElmGT from Streptomyces olivaceus.